A 721-amino-acid polypeptide reads, in one-letter code: Protein mu-NS (721 aa).

The interval 1 to 13 (MASFKGFSANTVP) is interaction with sigma-NS. The segment at 1–38 (MASFKGFSANTVPVSKAKRDISSLAATPGLRSQSFTPS) is RNA-binding. The tract at residues 14 to 40 (VSKAKRDISSLAATPGLRSQSFTPSVD) is interaction with mu-2. Positions 471–721 (SNDVTDGIKL…IDFSVPTDEL (251 aa)) are involved in the formation of factory-like inclusions. Coiled coils occupy residues 522 to 559 (PLLS…KSAQ) and 628 to 684 (LMNG…ALNQ).

This sequence belongs to the orthoreovirus mu-NS protein family. As to quaternary structure, interacts with mu-2. Interacts with sigma-NS; in viral factories. Interacts with the inner capsid proteins lambda-1 and sigma-2, and outer capsid protein lambda-2; in viral factories. In terms of processing, the N-terminus is blocked.

Its subcellular location is the host cytoplasm. Functionally, non-structural protein implicated with protein sigma-NS in forming the matrix of viral factories, which are large inclusions in the host cytoplasm where replication intermediates are assembled and viral RNA replication takes place. Together with mu-2, recruits the other core proteins to these factories. Binds RNA and recruits viral mRNAs to sites of viral replication. The protein is Protein mu-NS (M3) of Reovirus type 3 (strain Dearing) (T3D).